The sequence spans 167 residues: Insertion element IS1 4 protein InsB (167 aa).

Belongs to the transposase 27 family.

Absolutely required for transposition of IS1. The protein is Insertion element IS1 4 protein InsB (insB4) of Escherichia coli (strain K12).